A 144-amino-acid polypeptide reads, in one-letter code: Large ribosomal subunit protein uL15 (144 aa).

The tract at residues 1–49 (MKLNTLSPAAGAKSAAKRVGRGIGSGLGKTAGRGHKGQKSRSGGGVRVG) is disordered. The span at 21 to 31 (RGIGSGLGKTA) shows a compositional bias: gly residues.

It belongs to the universal ribosomal protein uL15 family. As to quaternary structure, part of the 50S ribosomal subunit.

In terms of biological role, binds to the 23S rRNA. The sequence is that of Large ribosomal subunit protein uL15 from Shewanella loihica (strain ATCC BAA-1088 / PV-4).